The sequence spans 128 residues: UPF0102 protein PSPTO_4420 (128 aa).

Belongs to the UPF0102 family.

This is UPF0102 protein PSPTO_4420 from Pseudomonas syringae pv. tomato (strain ATCC BAA-871 / DC3000).